Reading from the N-terminus, the 714-residue chain is Kinesin-like protein KIN-13 (714 aa).

The SAM domain maps to 1–63; sequence MSDLVYQWLE…FRLITTLKSR (63 aa). The segment covering 69 to 81 has biased composition (polar residues); the sequence is QQPSAPNTGATPQ. Disordered stretches follow at residues 69–109 and 122–161; these read QQPS…NDIQ and GGYEPPYVSAQGSGPANGDDYVIPTIPYHPNAPNPPNPRG. A compositionally biased stretch (low complexity) spans 82–92; that stretch reads SVPSSHVSPHV. Positions 151–160 are enriched in pro residues; that stretch reads PNAPNPPNPR. Residues 183 to 515 enclose the Kinesin motor domain; the sequence is RIRVVIRKRP…LRYADRVKEL (333 aa). 273–280 serves as a coordination point for ATP; that stretch reads GQTGSGKS.

It belongs to the TRAFAC class myosin-kinesin ATPase superfamily. Kinesin family. KIN-13 subfamily. As to quaternary structure, interacts with PLK. Post-translationally, phosphorylated by PLK.

The protein resides in the cytoplasm. The protein localises to the cytoskeleton. It is found in the cell projection. Its subcellular location is the cilium. It localises to the flagellum. The protein resides in the flagellum basal body. The protein localises to the flagellum axoneme. It is found in the spindle. Its subcellular location is the chromosome. It localises to the centromere. The protein resides in the kinetochore. Functionally, involved in cell cycle. Involved in formation of flagella, regulation of flagellar length, and formation of median bodies during interphase. Regulates flagellar length in all eight distal flagellar tips by promoting disassembly of the microtubules. Disassembles microtubules at the distal flagellar tips in a length-dependent manner in order to maintain different equilibrium lengths of the four flagellar pairs. Regulates interphase and mitotic microtubule dynamics. Regulates microtubule disassembly dynamics of the dual mitotic spindles and the median body. The chain is Kinesin-like protein KIN-13 from Giardia intestinalis (strain ATCC 50803 / WB clone C6) (Giardia lamblia).